Reading from the N-terminus, the 209-residue chain is Large ribosomal subunit protein uL3 (209 aa).

Q150 carries the N5-methylglutamine modification.

This sequence belongs to the universal ribosomal protein uL3 family. Part of the 50S ribosomal subunit. Forms a cluster with proteins L14 and L19. Methylated by PrmB.

In terms of biological role, one of the primary rRNA binding proteins, it binds directly near the 3'-end of the 23S rRNA, where it nucleates assembly of the 50S subunit. In Klebsiella pneumoniae (strain 342), this protein is Large ribosomal subunit protein uL3.